The chain runs to 97 residues: Carboxysome shell protein CsoS1B (97 aa).

A BMC domain is found at 8–93 (ALGMIETRGL…PHKEVEPVLT (86 aa)).

It belongs to the bacterial microcompartments protein family. CsoS1 subfamily. Homohexamer with a small central pore.

Its subcellular location is the carboxysome. Functionally, one of shell proteins of the carboxysome, a polyhedral inclusion where RuBisCO (ribulose bisphosphate carboxylase, ccbL-ccbS) is sequestered. Assembles into hexamers which make sheets that form the facets of the polyhedral carboxysome. The shell probably limits the diffusion of CO(2) into and out of the carboxysome. The polypeptide is Carboxysome shell protein CsoS1B (Hydrogenovibrio crunogenus (strain DSM 25203 / XCL-2) (Thiomicrospira crunogena)).